The chain runs to 292 residues: Elongation factor Ts (292 aa).

The tract at residues 79-82 (TDFV) is involved in Mg(2+) ion dislocation from EF-Tu.

This sequence belongs to the EF-Ts family.

It is found in the cytoplasm. In terms of biological role, associates with the EF-Tu.GDP complex and induces the exchange of GDP to GTP. It remains bound to the aminoacyl-tRNA.EF-Tu.GTP complex up to the GTP hydrolysis stage on the ribosome. This is Elongation factor Ts from Xanthomonas euvesicatoria pv. vesicatoria (strain 85-10) (Xanthomonas campestris pv. vesicatoria).